A 240-amino-acid chain; its full sequence is Probable transcriptional regulatory protein OEOE_0768 (240 aa).

A disordered region spans residues 1 to 21; the sequence is MSGHSKWHNIQGRKNAQDAKR.

The protein belongs to the TACO1 family.

The protein resides in the cytoplasm. The chain is Probable transcriptional regulatory protein OEOE_0768 from Oenococcus oeni (strain ATCC BAA-331 / PSU-1).